A 247-amino-acid polypeptide reads, in one-letter code: Putative ankyrin repeat protein RBE_1110 (247 aa).

2 ANK repeats span residues 105-135 (QNKDVFYQAVMSNKKKLVKKILSYNPKCIDY) and 139-171 (EGHNVLHIALKNKAKADAEMIEILLQCKPKLIT).

The polypeptide is Putative ankyrin repeat protein RBE_1110 (Rickettsia bellii (strain RML369-C)).